Consider the following 698-residue polypeptide: Elongation factor G (698 aa).

The 276-residue stretch at 6 to 281 (ENIRNIGICA…AVVDYLPSPI (276 aa)) folds into the tr-type G domain. GTP-binding positions include 15–22 (AHIDAGKT), 79–83 (DTPGH), and 133–136 (NKMD).

It belongs to the TRAFAC class translation factor GTPase superfamily. Classic translation factor GTPase family. EF-G/EF-2 subfamily.

The protein resides in the cytoplasm. Catalyzes the GTP-dependent ribosomal translocation step during translation elongation. During this step, the ribosome changes from the pre-translocational (PRE) to the post-translocational (POST) state as the newly formed A-site-bound peptidyl-tRNA and P-site-bound deacylated tRNA move to the P and E sites, respectively. Catalyzes the coordinated movement of the two tRNA molecules, the mRNA and conformational changes in the ribosome. The sequence is that of Elongation factor G from Rickettsia bellii (strain RML369-C).